The following is a 506-amino-acid chain: FAD-linked oxidoreductase aurO (506 aa).

In terms of domain architecture, FAD-binding PCMH-type spans 92–260; the sequence is ITAQPLAICR…AETDVRVYPM (169 aa).

The protein belongs to the oxygen-dependent FAD-linked oxidoreductase family. As to quaternary structure, might be part of an extracellular enzyme complex composed of GIP1, aurF, aurO and aurS. The cofactor is FAD.

It is found in the secreted. It localises to the extracellular space. It participates in pigment biosynthesis. Its function is as follows. FAD-linked oxidoreductase; part of the gene cluster that mediates the biosynthesis of aurofusarin, a red mycelium pigment which is acting as a mycotoxin. The first step is performed by the polyketide synthase which condenses one acetyl-CoA and 6 malonyl-CoA units to form the first intermediate, the cyclic heptaketide and yellow pigment YWA1. The C2 hydroxyl group in the pyrone ring of YWA1 is probably formed during ring closure by an aldol-type cyclization reaction. The dehydratase aurZ then acts as the first tailoring enzyme in the aurofusarin biosynthetic pathway by converting YWA1 to nor-rubrofusarin. Nor-rubrofusarin is then methylated to rubrofusarin by the O-methyltransferase aurJ. Rubrofusarin is then transported across the plasma membrane by the rubrofusarin-specific pump aurT for further enzymatic processing by the extracellular complex composed of GIP1, aurF, aurO and aurS to yield aurofusarin. This Gibberella zeae (strain ATCC MYA-4620 / CBS 123657 / FGSC 9075 / NRRL 31084 / PH-1) (Wheat head blight fungus) protein is FAD-linked oxidoreductase aurO.